A 626-amino-acid chain; its full sequence is Chaperone protein HtpG (626 aa).

The a; substrate-binding stretch occupies residues Met1–Arg341. Residues Glu342–Lys552 are b. Residues Ile553–Ile626 are c.

Belongs to the heat shock protein 90 family. In terms of assembly, homodimer.

The protein resides in the cytoplasm. Functionally, molecular chaperone. Has ATPase activity. This Alkaliphilus oremlandii (strain OhILAs) (Clostridium oremlandii (strain OhILAs)) protein is Chaperone protein HtpG.